The sequence spans 512 residues: Dihydroniloticin synthase CYP71CD2 (512 aa).

The helical transmembrane segment at Met-1–Phe-21 threads the bilayer. Residue Cys-449 coordinates heme.

This sequence belongs to the cytochrome P450 family. Heme serves as cofactor.

It localises to the membrane. The enzyme catalyses tirucalla-7,24-dien-3beta-ol + 2 reduced [NADPH--hemoprotein reductase] + 2 O2 = dihydroniloticin + 2 oxidized [NADPH--hemoprotein reductase] + 2 H2O + 2 H(+). Its pathway is secondary metabolite biosynthesis; terpenoid biosynthesis. Functionally, monooxygenase involved in the biosynthesis of limonoids triterpene natural products such as azadirachtin, an antifeedant widely used as bioinsecticide, and possessing many medicinal applications including anti-tumoral, anti-malarial, anti-rheumatic, antibacterial, anti-inflammatory, anti-pyretic and diuretic effects. Catalyzes the conversion of tirucalladienol to dihydroniloticin. This is Dihydroniloticin synthase CYP71CD2 from Azadirachta indica (Neem tree).